The chain runs to 319 residues: V-set and transmembrane domain-containing protein 4 (319 aa).

The N-terminal stretch at 1-23 (MRLRLLALAAAVLLGPAPEVCGA) is a signal peptide. The Ig-like domain occupies 24–154 (LNVTVSPGPV…SSATEMRVIS (131 aa)). N-linked (GlcNAc...) asparagine glycosylation is found at N25 and N41. An intrachain disulfide couples C46 to C126. The N-linked (GlcNAc...) asparagine glycan is linked to N143. A helical membrane pass occupies residues 180–200 (AVLVCCVGILSVLLFTLVIAW).

Proteolytically cleaved to generate a bioactive peptide. Peptide Lv is widely expressed in various tissues and the central nervous system, including the retinal photoreceptor layer, hippocampus, olfactory bulb, and cerebellum.

Its subcellular location is the cell membrane. It localises to the secreted. Its function is as follows. Peptide Lv enhances L-type voltage-gated calcium channel (L-VGCC) currents in retinal photoreceptors. This Mus musculus (Mouse) protein is V-set and transmembrane domain-containing protein 4 (Vstm4).